The chain runs to 326 residues: Protease HtpX homolog (326 aa).

2 helical membrane-spanning segments follow: residues 10–30 and 41–61; these read LNMA…ALAV and VGLM…QWLF. Histidine 147 is a binding site for Zn(2+). Residue glutamate 148 is part of the active site. Histidine 151 is a binding site for Zn(2+). Transmembrane regions (helical) follow at residues 159–179 and 197–217; these read LLMA…WIFW and LLFL…LLVL. Glutamate 224 contacts Zn(2+).

It belongs to the peptidase M48B family. It depends on Zn(2+) as a cofactor.

The protein resides in the cell membrane. This is Protease HtpX homolog from Saccharolobus islandicus (strain Y.N.15.51 / Yellowstone #2) (Sulfolobus islandicus).